Reading from the N-terminus, the 525-residue chain is Nucleolar and spindle-associated protein 1-C (525 aa).

Disordered regions lie at residues 43–203, 250–293, 373–398, and 452–525; these read FYPE…KKLH, TPVS…FSAA, TPES…EKAK, and LSRP…VPVQ. Polar residues predominate over residues 58-69; sequence SSLTDTDELNSS. Basic residues predominate over residues 82–92; sequence THRRGRGRKPL. The span at 93–102 shows a compositional bias: basic and acidic residues; it reads KNHDTPKDEF. Over residues 113 to 127 the composition is skewed to polar residues; that stretch reads SLASETDNTQHQNCL. Over residues 160 to 169 the composition is skewed to basic and acidic residues; it reads TTEKRQKKAS. A compositionally biased stretch (polar residues) spans 270–285; sequence PPTTGASPSRTPTNQR. Positions 476 to 494 are enriched in polar residues; that stretch reads CGSNNNVSVLKNNFKQPHL. Over residues 495–514 the composition is skewed to basic and acidic residues; the sequence is QTREDRRKQHEQDRKGKRDQ.

The protein belongs to the NUSAP family. In terms of assembly, interacts with DNA, microtubules, ipo7, kpna2 and kpnb1. Microtubule stabilization is inhibited by ipo7 and kpna2, while microtubule bundling is inhibited by kpnb1. Active GTP-bound ran causes dissociation of ipo7 and kpnb1.

Its subcellular location is the cytoplasm. It is found in the nucleus. The protein localises to the cytoskeleton. It localises to the spindle. Functionally, microtubule-associated protein with the capacity to bundle and stabilize microtubules. May associate with chromosomes and promote the organization of meiotic or mitotic spindle microtubules around them. This chain is Nucleolar and spindle-associated protein 1-C (nusap1-c), found in Xenopus laevis (African clawed frog).